A 256-amino-acid polypeptide reads, in one-letter code: Putative bidirectional sugar transporter SWEET7e (256 aa).

At 1–9 (MVSPDLIRN) the chain is on the extracellular side. A helical transmembrane segment spans residues 10-30 (VVGIVGNAISFGLFLSPVLTF). The 88-residue stretch at 10–97 (VVGIVGNAIS…TIFFLFSNKK (88 aa)) folds into the MtN3/slv 1 domain. Residues 31–45 (WRIIKEKDMKYFKAD) are Cytoplasmic-facing. Residues 46–66 (PYLATLLNCMLWVFYGLPIVH) traverse the membrane as a helical segment. Topologically, residues 67 to 69 (PNS) are extracellular. A helical membrane pass occupies residues 70 to 90 (ILVVTINGIGLVIEAVYLTIF). Residues 91–100 (FLFSNKKNKK) lie on the Cytoplasmic side of the membrane. A helical membrane pass occupies residues 101 to 121 (MGVVLATEALFMAAVALGVLL). Topologically, residues 122 to 130 (GAHTHQRRS) are extracellular. A helical transmembrane segment spans residues 131–151 (LIVGILCVIFGTIMYSSPLTI). Residues 133-212 (VGILCVIFGT…LMQLILDKNQ (80 aa)) enclose the MtN3/slv 2 domain. The Cytoplasmic segment spans residues 152–164 (MSQVVKTKSVEYM). Residues 165–185 (PLLLSVVSFLNGLCWTSYALI) traverse the membrane as a helical segment. A topological domain (extracellular) is located at residue R186. Residues 187 to 207 (FDIFITIPNGLGVLFTLMQLI) form a helical membrane-spanning segment. The Cytoplasmic portion of the chain corresponds to 208–256 (LDKNQDKNLELPTVAPVAKETSIVTPVSKDDDINGSTASHVIINITKEP).

It belongs to the SWEET sugar transporter family. In terms of assembly, forms homooligomers and/or heterooligomers.

The protein localises to the cell membrane. Mediates both low-affinity uptake and efflux of sugar across the plasma membrane. The sequence is that of Putative bidirectional sugar transporter SWEET7e (SWEET7E) from Oryza sativa subsp. japonica (Rice).